The following is a 319-amino-acid chain: Taste receptor type 2 member 30 (319 aa).

Methionine 1 is a topological domain (extracellular). Residues 2-22 (ITFLPIIFSILIVVIFVIGNF) traverse the membrane as a helical segment. The Cytoplasmic portion of the chain corresponds to 23–46 (ANGFIALVNSIEWVKRQKISFADQ). Residues 47-67 (ILIALAVSRVGLLWALLLHWY) traverse the membrane as a helical segment. The Extracellular portion of the chain corresponds to 68–86 (ATELNLAFYSVEVRITAYN). A helical membrane pass occupies residues 87–107 (VWAVTNHFSNWLATSLSMFYL). Topologically, residues 108 to 126 (LKIANFSNLIFLRIKRRVK) are cytoplasmic. A helical transmembrane segment spans residues 127 to 147 (SVILVILLGPLLFLVCHLFVI). At 148–178 (NMNEIVWTKEYEGNLTWKIKLRNAVFLSNMT) the chain is on the extracellular side. N-linked (GlcNAc...) asparagine glycosylation is found at asparagine 161 and asparagine 176. The helical transmembrane segment at 179–199 (LTMLANFVPLTLTLISFLLLI) threads the bilayer. At 200–229 (CSLCKHLKKMQLHGKGSQDPSTKVHIKALQ) the chain is on the cytoplasmic side. A helical transmembrane segment spans residues 230-250 (TVTCFLLLCAIYFLSMIISVY). The Extracellular segment spans residues 251–259 (NFGRLEKKP). Residues 260-280 (VFMFCQAITFSYPSTHAFILI) traverse the membrane as a helical segment. Over 281–319 (WGNKKLKQIFLSVLWHVRYWVKDRSLRLHRFTRAALCKG) the chain is Cytoplasmic.

Belongs to the G-protein coupled receptor T2R family.

Its subcellular location is the membrane. Functionally, receptor that may play a role in the perception of bitterness and is gustducin-linked. May play a role in sensing the chemical composition of the gastrointestinal content. The activity of this receptor may stimulate alpha gustducin, mediate PLC-beta-2 activation and lead to the gating of TRPM5. The protein is Taste receptor type 2 member 30 (TAS2R30) of Pongo pygmaeus (Bornean orangutan).